The sequence spans 1462 residues: uncharacterized protein (1462 aa).

A helical membrane pass occupies residues 119–139 (TGYITSLCLSAILKFFSFRII). S411 and S420 each carry phosphoserine. The SEC7 domain occupies 541–730 (TLIESKKRKA…SEIYKAIKEN (190 aa)). An HEAT repeat occupies 1102–1139 (ENSEDWGLFSKLCNLLNDKNIVVRNQSLSLFHQLVNKY).

Its subcellular location is the cytoplasm. The protein resides in the golgi apparatus membrane. This is an uncharacterized protein from Schizosaccharomyces pombe (strain 972 / ATCC 24843) (Fission yeast).